A 204-amino-acid chain; its full sequence is Octanoyltransferase (204 aa).

In terms of domain architecture, BPL/LPL catalytic spans 27–204; the sequence is KNTKDELWIV…LINYVSRNRH (178 aa). Substrate is bound by residues 66-73, 133-135, and 146-148; these read RGGQVTYH, ALG, and GLS. Cys-164 (acyl-thioester intermediate) is an active-site residue.

The protein belongs to the LipB family.

It localises to the cytoplasm. The catalysed reaction is octanoyl-[ACP] + L-lysyl-[protein] = N(6)-octanoyl-L-lysyl-[protein] + holo-[ACP] + H(+). Its pathway is protein modification; protein lipoylation via endogenous pathway; protein N(6)-(lipoyl)lysine from octanoyl-[acyl-carrier-protein]: step 1/2. Functionally, catalyzes the transfer of endogenously produced octanoic acid from octanoyl-acyl-carrier-protein onto the lipoyl domains of lipoate-dependent enzymes. Lipoyl-ACP can also act as a substrate although octanoyl-ACP is likely to be the physiological substrate. This Vesicomyosocius okutanii subsp. Calyptogena okutanii (strain HA) protein is Octanoyltransferase.